We begin with the raw amino-acid sequence, 320 residues long: Ferrochelatase (320 aa).

His-194 and Glu-275 together coordinate Fe cation.

Belongs to the ferrochelatase family. As to quaternary structure, monomer.

Its subcellular location is the cytoplasm. It catalyses the reaction heme b + 2 H(+) = protoporphyrin IX + Fe(2+). It functions in the pathway porphyrin-containing compound metabolism; protoheme biosynthesis; protoheme from protoporphyrin-IX: step 1/1. Catalyzes the ferrous insertion into protoporphyrin IX. The polypeptide is Ferrochelatase (Escherichia coli (strain 55989 / EAEC)).